Reading from the N-terminus, the 647-residue chain is Shugoshin-2 (647 aa).

S7 carries the post-translational modification Phosphoserine. 2 coiled-coil regions span residues 28–87 and 125–145; these read SKAQ…FHEE and DEES…HDVS. The disordered stretch occupies residues 171–295; that stretch reads REANVFSDTQ…DTVIQSTPTK (125 aa). The segment covering 200–210 has biased composition (low complexity); that stretch reads NLSNSKPVNNN. At S240 the chain carries Phosphoserine. Composition is skewed to polar residues over residues 242-253 and 282-293; these read KSLSNKINNQAA and RIQSDTVIQSTP. T292 carries the phosphothreonine modification. Phosphoserine occurs at positions 332 and 335. Polar residues-rich tracts occupy residues 375–396 and 462–478; these read SLTS…NMTV and EPPS…NNSP. 4 disordered regions span residues 375 to 416, 453 to 486, 522 to 579, and 593 to 647; these read SLTS…DSSV, RNPP…SLQG, TNLK…ERKK, and RNFD…TLNL. Basic and acidic residues-rich tracts occupy residues 528–541 and 593–602; these read NEND…SRRE and RNFDLPSDHV. Residues 621–647 show a composition bias toward polar residues; that stretch reads KTETANITSEAPTTSEVTLENSETLNL.

This sequence belongs to the shugoshin family.

It localises to the chromosome. The protein resides in the centromere. Functionally, involved in chromosome cohesion during mitosis and meiosis by preventing premature dissociation of cohesin complex from centromeres after prophase, when most of cohesin complex dissociates from chromosomes arms. Required for faithful mitotic chromosome segregation and proper kinetochore orientation during meiosis I. In contrast to sgo1, it is dispensable for centromeric protection of rec8 during meiosis I as well as protection of rad21 during mitosis. Required to sense the lack of tension at centromeres during mitosis. The polypeptide is Shugoshin-2 (sgo2) (Schizosaccharomyces pombe (strain 972 / ATCC 24843) (Fission yeast)).